Here is a 1352-residue protein sequence, read N- to C-terminus: Spike glycoprotein (1352 aa).

The first 12 residues, 1-12, serve as a signal peptide directing secretion; the sequence is MIRSVLVLMCSL. Residues 13–1297 lie on the Extracellular side of the membrane; it reads TFIGNLTRGQ…GNYTFYQKWP (1285 aa). Residues 22 to 359 enclose the BetaCoV S1-NTD domain; it reads QSVDMGHNGT…DDLAQLQCSY (338 aa). 8 N-linked (GlcNAc...) asparagine; by host glycosylation sites follow: Asn-29, Asn-73, Asn-111, Asn-132, Asn-167, Asn-174, Asn-244, and Asn-250. The cysteines at positions 193 and 245 are disulfide-linked. Disulfide bonds link Cys-347/Cys-357 and Cys-391/Cys-415. Positions 389–585 constitute a BetaCoV S1-CTD domain; sequence QECDFTPMLT…GTDTNSVCPM (197 aa). Asn-418 carries N-linked (GlcNAc...) asparagine; by host glycosylation. 2 disulfide bridges follow: Cys-433–Cys-486 and Cys-445–Cys-583. Asn-495, Asn-590, Asn-617, Asn-716, Asn-760, Asn-771, Asn-782, and Asn-867 each carry an N-linked (GlcNAc...) asparagine; by host glycan. 2 fusion peptide regions span residues 885 to 906 and 904 to 926; these read STIE…MQGY and QGYD…AQYV. Cys-909 and Cys-922 are joined by a disulfide. A heptad repeat 1 region spans residues 991-1041; that stretch reads QKIIANKFNQALGAMQTGFTTTNLAFNKVQDAVNANAMALSKLAAELSNTF. A coiled-coil region spans residues 1020-1064; the sequence is QDAVNANAMALSKLAAELSNTFGAISSSISDILARLDTVEQEAQI. N-linked (GlcNAc...) asparagine; by host glycans are attached at residues Asn-1145, Asn-1172, Asn-1214, Asn-1226, Asn-1242, Asn-1257, Asn-1278, and Asn-1289. The interval 1247-1286 is heptad repeat 2; sequence GPNFQEISKINTTLLNLNTELMVLSEVVKQLNESYIDLKE. Residues 1259 to 1287 are a coiled coil; that stretch reads TLLNLNTELMVLSEVVKQLNESYIDLKEL. A helical transmembrane segment spans residues 1298-1318; sequence WYIWLGFIAGLVALALCVFFI. The Cytoplasmic segment spans residues 1319-1352; sequence LCCTGCGTSCLGKLKCNRCCDSYDEYEVEKIHVH. The short motif at 1350 to 1352 is the KxHxx element; it reads HVH.

This sequence belongs to the betacoronaviruses spike protein family. As to quaternary structure, homotrimer; each monomer consists of a S1 and a S2 subunit. The resulting peplomers protrude from the virus surface as spikes. Specific enzymatic cleavages in vivo yield mature proteins. The precursor is processed into S1 and S2 by host cell furin or another cellular protease to yield the mature S1 and S2 proteins. Additionally, a second cleavage leads to the release of a fusion peptide after viral attachment to host cell receptor. In terms of processing, the cytoplasmic Cys-rich domain is palmitoylated. Spike glycoprotein is digested within host endosomes.

The protein localises to the virion membrane. It localises to the host endoplasmic reticulum-Golgi intermediate compartment membrane. Its subcellular location is the host cell membrane. In terms of biological role, attaches the virion to the cell membrane by interacting with host receptor, initiating the infection. Mediates fusion of the virion and cellular membranes by acting as a class I viral fusion protein. Under the current model, the protein has at least three conformational states: pre-fusion native state, pre-hairpin intermediate state, and post-fusion hairpin state. During viral and target cell membrane fusion, the coiled coil regions (heptad repeats) assume a trimer-of-hairpins structure, positioning the fusion peptide in close proximity to the C-terminal region of the ectodomain. The formation of this structure appears to drive apposition and subsequent fusion of viral and target cell membranes. Functionally, acts as a viral fusion peptide which is unmasked following S2 cleavage occurring upon virus endocytosis. This chain is Spike glycoprotein, found in Bat coronavirus HKU5 (BtCoV).